Reading from the N-terminus, the 306-residue chain is GTPase Era (306 aa).

The Era-type G domain maps to 13–181; that stretch reads YCGFIAIVGR…EKIVRESLHE (169 aa). The tract at residues 21–28 is G1; that stretch reads GRPNVGKS. A GTP-binding site is contributed by 21–28; it reads GRPNVGKS. The tract at residues 47-51 is G2; the sequence is QTTRH. Residues 68–71 are G3; that stretch reads DTPG. Residues 68–72 and 130–133 each bind GTP; these read DTPGL and NKID. The segment at 130–133 is G4; that stretch reads NKID. Residues 160-162 are G5; it reads ISA. The 78-residue stretch at 212 to 289 folds into the KH type-2 domain; it reads TGDELPYSVT…HLELWVKVKS (78 aa).

The protein belongs to the TRAFAC class TrmE-Era-EngA-EngB-Septin-like GTPase superfamily. Era GTPase family. As to quaternary structure, monomer.

The protein localises to the cytoplasm. It is found in the cell inner membrane. Its function is as follows. An essential GTPase that binds both GDP and GTP, with rapid nucleotide exchange. Plays a role in 16S rRNA processing and 30S ribosomal subunit biogenesis and possibly also in cell cycle regulation and energy metabolism. In Pasteurella multocida (strain Pm70), this protein is GTPase Era.